The following is a 405-amino-acid chain: MDKKLNNLILVLNCGSSSIKFAILNPDNKEKYLSGSVECLFLLETYITWQCLGTKHKKKIGANVNHKDALNFIIEQVFSQQKDIFKNLIGVGHRVVHGGTKIKKSTLIDSNIIKCIQDASSFAPLHNPANLIGIKMIIEKYPSLSRKNIAVFDTSFYCNMPETSFLYAIPYNFYKKYGIRRYGAHGISHNYVAHRASLMLNKQFKSLNIITCHLGNGSSISAICNGICVDTSMGLTPLEGLVMGTRSGDLDPSIIFFMNNHLNLSIDKIETILNKKSGLLGLSGISSDFRYFEKKYYCKKHAKRSVDIFCHRLSKYIAAYTSVLENRLDAVIFTGGIGENVPLIRELVFSRLSLLGFKINSNLNLSTIGGKSGLITEDNSTPVFVITTDEELAIAQETNSIINRK.

Asparagine 13 contacts Mg(2+). Lysine 20 is an ATP binding site. Position 94 (arginine 94) interacts with substrate. Aspartate 153 functions as the Proton donor/acceptor in the catalytic mechanism. ATP contacts are provided by residues 213-217 (HLGNG), 288-290 (DFR), and 336-340 (GIGEN). Glutamate 390 contacts Mg(2+).

This sequence belongs to the acetokinase family. Homodimer. It depends on Mg(2+) as a cofactor. Mn(2+) serves as cofactor.

Its subcellular location is the cytoplasm. The enzyme catalyses acetate + ATP = acetyl phosphate + ADP. It functions in the pathway metabolic intermediate biosynthesis; acetyl-CoA biosynthesis; acetyl-CoA from acetate: step 1/2. Catalyzes the formation of acetyl phosphate from acetate and ATP. Can also catalyze the reverse reaction. The chain is Acetate kinase from Buchnera aphidicola subsp. Acyrthosiphon pisum (strain APS) (Acyrthosiphon pisum symbiotic bacterium).